We begin with the raw amino-acid sequence, 310 residues long: D-alanine--D-alanine ligase (310 aa).

One can recognise an ATP-grasp domain in the interval 104–305 (KRLFHSEGLP…MPQLAERILQ (202 aa)). Residue 135–190 (LGDFHGAAFVKPLDSGSSVGISRAVGKDELIRGVAKALSVSHRCMVERAIEGRELT) coordinates ATP. 3 residues coordinate Mg(2+): aspartate 259, glutamate 272, and asparagine 274.

This sequence belongs to the D-alanine--D-alanine ligase family. Requires Mg(2+) as cofactor. Mn(2+) is required as a cofactor.

The protein resides in the cytoplasm. It carries out the reaction 2 D-alanine + ATP = D-alanyl-D-alanine + ADP + phosphate + H(+). It participates in cell wall biogenesis; peptidoglycan biosynthesis. Cell wall formation. This is D-alanine--D-alanine ligase from Magnetococcus marinus (strain ATCC BAA-1437 / JCM 17883 / MC-1).